The primary structure comprises 367 residues: D-alanine--D-alanine ligase (367 aa).

Positions 150-357 (KKLLASAGLP…YPTLLATMVE (208 aa)) constitute an ATP-grasp domain. Position 178–233 (178–233 (RERLGLPVFVKPSRGGSSIGVSRVTAWDELPAAIELARRHDPKVIIEAAVPGRELE)) interacts with ATP. Residues aspartate 312, glutamate 324, and asparagine 326 each coordinate Mg(2+).

The protein belongs to the D-alanine--D-alanine ligase family. Mg(2+) is required as a cofactor. Requires Mn(2+) as cofactor.

Its subcellular location is the cytoplasm. The enzyme catalyses 2 D-alanine + ATP = D-alanyl-D-alanine + ADP + phosphate + H(+). It participates in cell wall biogenesis; peptidoglycan biosynthesis. Its function is as follows. Cell wall formation. This is D-alanine--D-alanine ligase from Mycolicibacterium gilvum (strain PYR-GCK) (Mycobacterium gilvum (strain PYR-GCK)).